The following is a 221-amino-acid chain: MPGSRIALRHGLIDAARQVTTLGLNKGTAGNLSVRAGDGLLITPSGLQAADLRPNDIVFIDSEGEWRGPRKPSSEWRFHHDILAERPDVGAVVHTHAPFSTVLACLGRPIPAFHYMVAMAGGNDIRIGAYATFGTAELSRHALAAMEGRKACLLAHHGMIATGRTLKAAIKLAVEVEELAEQYWRCLQIAEPEILPADEMERVLEKFKTYGDNAQLPSPPA.

Glu-75 acts as the Proton donor/acceptor in catalysis. Co(2+)-binding residues include Glu-75, His-94, His-96, and His-157.

The protein belongs to the aldolase class II family. Co(2+) serves as cofactor.

It catalyses the reaction 5-(methylsulfanyl)-D-ribulose 1-phosphate = 2-(methylsulfanyl)acetaldehyde + dihydroxyacetone phosphate. The enzyme catalyses 5-deoxy-D-ribulose 1-phosphate = dihydroxyacetone phosphate + acetaldehyde. Its pathway is amino-acid biosynthesis; L-methionine biosynthesis via salvage pathway. In terms of biological role, uses 5-methylthioribulose-1-phosphate to yield 2-(methylthio)acetaldehyde and dihydroxyacetone phosphate. Can also use 5-deoxyribulose 1-phosphate to yield acetaldehyde and dihydroxyacetone phosphate. Part of a bifunctional DHAP-shunt salvage pathway for SAM by-products. In Rhodospirillum rubrum (strain ATCC 11170 / ATH 1.1.1 / DSM 467 / LMG 4362 / NCIMB 8255 / S1), this protein is 5-methylthioribulose-1-phosphate/5-deoxyribulose-1-phosphate aldolase.